Reading from the N-terminus, the 226-residue chain is PKHD-type hydroxylase mma_3618 (226 aa).

The region spanning 78-178 (RYMPPLFNRY…RISSFFWVQS (101 aa)) is the Fe2OG dioxygenase domain. Fe cation is bound by residues H96, D98, and H159. R169 contributes to the 2-oxoglutarate binding site.

Fe(2+) is required as a cofactor. The cofactor is L-ascorbate.

This chain is PKHD-type hydroxylase mma_3618, found in Janthinobacterium sp. (strain Marseille) (Minibacterium massiliensis).